The primary structure comprises 335 residues: Anthranilate phosphoribosyltransferase (335 aa).

5-phospho-alpha-D-ribose 1-diphosphate contacts are provided by residues glycine 79, 82–83, threonine 87, 89–92, 107–115, and serine 119; these read GD, NIST, and KHCNQGVSS. Residue glycine 79 coordinates anthranilate. Position 91 (serine 91) interacts with Mg(2+). Residue asparagine 110 participates in anthranilate binding. An anthranilate-binding site is contributed by arginine 165. Residues aspartate 223 and glutamate 224 each coordinate Mg(2+).

The protein belongs to the anthranilate phosphoribosyltransferase family. Homodimer. Mg(2+) is required as a cofactor.

It carries out the reaction N-(5-phospho-beta-D-ribosyl)anthranilate + diphosphate = 5-phospho-alpha-D-ribose 1-diphosphate + anthranilate. Its pathway is amino-acid biosynthesis; L-tryptophan biosynthesis; L-tryptophan from chorismate: step 2/5. Functionally, catalyzes the transfer of the phosphoribosyl group of 5-phosphorylribose-1-pyrophosphate (PRPP) to anthranilate to yield N-(5'-phosphoribosyl)-anthranilate (PRA). In Buchnera aphidicola subsp. Diuraphis noxia, this protein is Anthranilate phosphoribosyltransferase.